We begin with the raw amino-acid sequence, 305 residues long: Ornithine carbamoyltransferase (305 aa).

Carbamoyl phosphate contacts are provided by residues 50–53, Gln-77, Arg-101, and 128–131; these read STRT and HPCQ. L-ornithine-binding positions include Asn-159, Asp-222, and 226-227; that span reads SM. Carbamoyl phosphate contacts are provided by residues 262–263 and Arg-290; that span reads CL.

This sequence belongs to the aspartate/ornithine carbamoyltransferase superfamily. OTCase family.

The protein resides in the cytoplasm. The enzyme catalyses carbamoyl phosphate + L-ornithine = L-citrulline + phosphate + H(+). The protein operates within amino-acid biosynthesis; L-arginine biosynthesis; L-arginine from L-ornithine and carbamoyl phosphate: step 1/3. Its function is as follows. Reversibly catalyzes the transfer of the carbamoyl group from carbamoyl phosphate (CP) to the N(epsilon) atom of ornithine (ORN) to produce L-citrulline. The protein is Ornithine carbamoyltransferase of Synechococcus elongatus (strain ATCC 33912 / PCC 7942 / FACHB-805) (Anacystis nidulans R2).